We begin with the raw amino-acid sequence, 231 residues long: 7-cyano-7-deazaguanine synthase (231 aa).

An ATP-binding site is contributed by Phe-8–Leu-18. The Zn(2+) site is built by Cys-188, Cys-197, Cys-200, and Cys-203.

It belongs to the QueC family. Zn(2+) serves as cofactor.

The enzyme catalyses 7-carboxy-7-deazaguanine + NH4(+) + ATP = 7-cyano-7-deazaguanine + ADP + phosphate + H2O + H(+). Its pathway is purine metabolism; 7-cyano-7-deazaguanine biosynthesis. In terms of biological role, catalyzes the ATP-dependent conversion of 7-carboxy-7-deazaguanine (CDG) to 7-cyano-7-deazaguanine (preQ(0)). This Salmonella paratyphi A (strain ATCC 9150 / SARB42) protein is 7-cyano-7-deazaguanine synthase.